The sequence spans 489 residues: Glutamyl-tRNA(Gln) amidotransferase subunit A (489 aa).

Catalysis depends on charge relay system residues K78 and S153. Residue S177 is the Acyl-ester intermediate of the active site.

It belongs to the amidase family. GatA subfamily. As to quaternary structure, heterotrimer of A, B and C subunits.

It carries out the reaction L-glutamyl-tRNA(Gln) + L-glutamine + ATP + H2O = L-glutaminyl-tRNA(Gln) + L-glutamate + ADP + phosphate + H(+). In terms of biological role, allows the formation of correctly charged Gln-tRNA(Gln) through the transamidation of misacylated Glu-tRNA(Gln) in organisms which lack glutaminyl-tRNA synthetase. The reaction takes place in the presence of glutamine and ATP through an activated gamma-phospho-Glu-tRNA(Gln). The polypeptide is Glutamyl-tRNA(Gln) amidotransferase subunit A (Nitratidesulfovibrio vulgaris (strain DP4) (Desulfovibrio vulgaris)).